Here is a 257-residue protein sequence, read N- to C-terminus: Na(+)-translocating NADH-quinone reductase subunit C (257 aa).

Residues 12 to 32 traverse the membrane as a helical segment; the sequence is LFVVIALSLVCSIIVSAAAVG. T225 carries the post-translational modification FMN phosphoryl threonine.

This sequence belongs to the NqrC family. In terms of assembly, composed of six subunits; NqrA, NqrB, NqrC, NqrD, NqrE and NqrF. FMN serves as cofactor.

It localises to the cell inner membrane. The catalysed reaction is a ubiquinone + n Na(+)(in) + NADH + H(+) = a ubiquinol + n Na(+)(out) + NAD(+). NQR complex catalyzes the reduction of ubiquinone-1 to ubiquinol by two successive reactions, coupled with the transport of Na(+) ions from the cytoplasm to the periplasm. NqrA to NqrE are probably involved in the second step, the conversion of ubisemiquinone to ubiquinol. This chain is Na(+)-translocating NADH-quinone reductase subunit C, found in Vibrio cholerae serotype O1 (strain ATCC 39541 / Classical Ogawa 395 / O395).